Consider the following 1640-residue polypeptide: MAAEASSTGLASCHLVESKSGAQGASGCQCTRCGRKVSVASGDHHKFPCGHAFCELCLLAPQEYTTSKCTDCEVHTTVSMNQGHYPVDGFIEEDSSLEALPPKMVNNCSSDLEKTVDQLINDLEHSSSIHRNVSNPSAVMSETEEIDEALKIAGCNFEQLSNAIKMLDSTQDQTRQETHSLTEAVEKQFDTLLASLDSRKKSLCEELIRRTDDYLSKLVTVKSYIEEKKSDLDAAMKIAKELRSAPSLRTYCDLTQIIRTLKLTFESELSQVSSIIPRNTPRLDINCSEAICMFSSMGKIEFEDSTKCYPQENEDGQNVQKKFNNRKELCCDVYSSLEKKKVDAAVLTDETPEPPLQAEAPDRHLEGKKKQPTKEMVVVTSPKTIAVLPQLGSSPDVIIEEIIEENLESCFTDDPIETSGYPKKPPQKEQSAPVGSKAGCPELVFVSHVIHPCHFYVRKYSQIKDATILEKKMKQVCNRSLHLDPSDILELGARIFVNSIKNRMWCRGIITEIIPSKTKNIRKPCSPTKFSVCEISLIQIFMVDFGNSEVLIITGVGDTHEGPEHDGEQHITLSDFCLLLMKSEPYSEELLKDIPHLAHLCSLKDIVPYNSTEGWEKEAKVEFLKMVNKKAVLMKVFGEEDDVLIVDLQKPPTNKISSDMPVSLRDALVFMELARFRSQSPRSHSEKNTTLCYHPPILPEEMTEVSVMVCHINSPTDFYLQLMENLDFLSLLKTIEEFYKGEDGENLEILCPLQNQACVAKFEDGIWYRAKVIGLPGHREVEVKYVDFGNTAKITLKDMRKIKDEFLEPPEKAIKCKLAYVEPSKKSQWSKKAKEKFEEKTQDKFVTCSVIKILENNVLLVELFDSRAPGKSAVSINDQLVKEGLASYEAGYTLKDNSKKHLEVWDPSPEEIITSEINNLSPLSVKSLPNENFQSLYNKELPVNICNVISPEKIYVQWLLTENLLNSLEEKMVAAYEHSEWKPVKWECDMHCAVKVPAKNQWRRGQILRMVTDKLVEVLLYDVGVELVVNIHCLRELQENLKTMGRLSLECSLVDIRPTGGSDKWTATACDCLSLHLTGAIATIILQESNTTWPLPVKIFCRDEKGERVDVSKYLIKKGLALRERRVSKSSNSHSPEKSLEIPLEQGDSVVTKCFKINFDTNKKIADKVNEHKVPDSKGKKSESRSTGCYRPPAVPNTSSFEAIVTCIGDDGTIFVVPKLSEFELIKMMDEIQSNLKCLGLLEPYSWKKGEPCAVRGSDTLWYRGKVMEVVGGTIRVQYLDHGFTEKIPQCHLYPILLYPDTPQFCIPCQLYQTLPVGNTWQPDAIELLQELLSKREVDIHIMELPNNSWGKLSVHLYFDGMSLSHFMAHHKYCIFEHTEEIFKEKPRGQNKKYEDENWKIRFEDLLLPEMEAPVLPPYLSSLLPPPEELFAVQVKHIVSPDEMYICLDSEDSYTQFNHHGDTDDSGVSWESESENLEEALQRFNKNVETFPPLTDFSSEMPCLAEYADGLWYRAKIISIKEFNPLSVLVLFVDYGCTEKLTINRLRQIPVQLMQYPAQAIKVLLAGFKPPLSDSGKTRIPYCPKWSMEALWTMIDCLQGKQLYASSVAQAPEQIVTLYEDEQYPVHMSLVEMGLADKDE.

The RING-type zinc-finger motif lies at 30–73; the sequence is CTRCGRKVSVASGDHHKFPCGHAFCELCLLAPQEYTTSKCTDCE. Serine 134 carries the phosphoserine modification. Lysine 229 is subject to N6-acetyllysine. Disordered stretches follow at residues 348 to 376 and 413 to 435; these read TDET…TKEM and DDPI…APVG. The segment covering 360–373 has biased composition (basic and acidic residues); the sequence is APDRHLEGKKKQPT. Tudor domains follow at residues 751 to 809 and 985 to 1044; these read CPLQ…FLEP and KWEC…LKTM. A compositionally biased stretch (basic and acidic residues) spans 1170-1184; the sequence is NEHKVPDSKGKKSES. The interval 1170–1191 is disordered; that stretch reads NEHKVPDSKGKKSESRSTGCYR. Tudor domains follow at residues 1246–1303 and 1496–1556; these read SWKK…PDTP and DFSS…LMQY.

Interacts with MXD1, MXD3, MXD4, MXI1 and PIWIL1. Self-associates. Expressed at high levels in adult testis. Expressed in male germ cells (at protein level). Expressed at lower levels in adult thyroid, submaxillary gland, ovary and epididymis.

The protein localises to the cytoplasm. Its subcellular location is the nucleus. Seems to be involved in regulation of transcriptional activity of MYC. In vitro, inhibits DNA-binding activity of Mad-MAX heterodimers. Can recruit Mad transcriptional repressors (MXD1, MXD3, MXD4 and MXI1) to the cytoplasm. May be involved in spermiogenesis. This Mus musculus (Mouse) protein is RING finger protein 17 (Rnf17).